The chain runs to 229 residues: Phosphoglycolate phosphatase (229 aa).

Residue Asp-13 is the Nucleophile of the active site. Mg(2+) is bound by residues Asp-13, Asp-15, and Asp-178.

This sequence belongs to the HAD-like hydrolase superfamily. CbbY/CbbZ/Gph/YieH family. Mg(2+) serves as cofactor.

The enzyme catalyses 2-phosphoglycolate + H2O = glycolate + phosphate. It participates in organic acid metabolism; glycolate biosynthesis; glycolate from 2-phosphoglycolate: step 1/1. In terms of biological role, specifically catalyzes the dephosphorylation of 2-phosphoglycolate. Is involved in the dissimilation of the intracellular 2-phosphoglycolate formed during the DNA repair of 3'-phosphoglycolate ends, a major class of DNA lesions induced by oxidative stress. This is Phosphoglycolate phosphatase from Photobacterium profundum (strain SS9).